A 224-amino-acid chain; its full sequence is Superoxide dismutase [Mn], mitochondrial (224 aa).

The transit peptide at 1–20 (MLLARAFARRSLRAGLWCRQ) directs the protein to the mitochondrion. 4 residues coordinate Mn(2+): H46, H94, D177, and H181.

Belongs to the iron/manganese superoxide dismutase family. As to quaternary structure, homotetramer. Mn(2+) is required as a cofactor.

It localises to the mitochondrion matrix. It catalyses the reaction 2 superoxide + 2 H(+) = H2O2 + O2. Functionally, destroys superoxide anion radicals which are normally produced within the cells and which are toxic to biological systems. The polypeptide is Superoxide dismutase [Mn], mitochondrial (Charybdis feriata (Crucifix crab)).